Here is a 425-residue protein sequence, read N- to C-terminus: Serine--tRNA ligase (425 aa).

Residues Thr41–Thr70 form a disordered region. The segment covering Ser44–Gly54 has biased composition (polar residues). Over residues Val57–Thr70 the composition is skewed to basic and acidic residues. Thr234–Glu236 is an L-serine binding site. Arg265–Glu267 serves as a coordination point for ATP. An L-serine-binding site is contributed by Glu288. Glu352–Ser355 lines the ATP pocket. Ser388 provides a ligand contact to L-serine.

Belongs to the class-II aminoacyl-tRNA synthetase family. Type-1 seryl-tRNA synthetase subfamily. In terms of assembly, homodimer. The tRNA molecule binds across the dimer.

It is found in the cytoplasm. It catalyses the reaction tRNA(Ser) + L-serine + ATP = L-seryl-tRNA(Ser) + AMP + diphosphate + H(+). It carries out the reaction tRNA(Sec) + L-serine + ATP = L-seryl-tRNA(Sec) + AMP + diphosphate + H(+). It functions in the pathway aminoacyl-tRNA biosynthesis; selenocysteinyl-tRNA(Sec) biosynthesis; L-seryl-tRNA(Sec) from L-serine and tRNA(Sec): step 1/1. Catalyzes the attachment of serine to tRNA(Ser). Is also able to aminoacylate tRNA(Sec) with serine, to form the misacylated tRNA L-seryl-tRNA(Sec), which will be further converted into selenocysteinyl-tRNA(Sec). This chain is Serine--tRNA ligase, found in Trichodesmium erythraeum (strain IMS101).